The sequence spans 531 residues: Isocitrate lyase (531 aa).

101–103 provides a ligand contact to substrate; that stretch reads SGW. Aspartate 184 lines the Mg(2+) pocket. Cysteine 222 (proton acceptor) is an active-site residue. Substrate is bound by residues 223 to 224, 380 to 384, and threonine 451; these read GH and NNSPS.

It belongs to the isocitrate lyase/PEP mutase superfamily. Isocitrate lyase family. As to quaternary structure, homotetramer. It depends on Mg(2+) as a cofactor.

It catalyses the reaction D-threo-isocitrate = glyoxylate + succinate. It participates in carbohydrate metabolism; glyoxylate cycle; (S)-malate from isocitrate: step 1/2. Involved in the metabolic adaptation in response to environmental changes. Catalyzes the reversible formation of succinate and glyoxylate from isocitrate, a key step of the glyoxylate cycle, which operates as an anaplerotic route for replenishing the tricarboxylic acid cycle during growth on fatty acid substrates. In Pseudomonas aeruginosa (strain ATCC 15692 / DSM 22644 / CIP 104116 / JCM 14847 / LMG 12228 / 1C / PRS 101 / PAO1), this protein is Isocitrate lyase.